The chain runs to 482 residues: Adenylosuccinate lyase (482 aa).

Substrate contacts are provided by residues 14–15, 82–84, and 108–109; these read RY, RHD, and TS. His156 functions as the Proton donor/acceptor in the catalytic mechanism. Residue Lys196 forms a Glycyl lysine isopeptide (Lys-Gly) (interchain with G-Cter in ubiquitin) linkage. Position 238 (Gln238) interacts with substrate. Ser286 functions as the Proton donor/acceptor in the catalytic mechanism. Residues Arg300, Arg326, Ser331, and Arg335 each coordinate substrate.

The protein belongs to the lyase 1 family. Adenylosuccinate lyase subfamily. Homotetramer. Residues from neighboring subunits contribute catalytic and substrate-binding residues to each active site.

The enzyme catalyses N(6)-(1,2-dicarboxyethyl)-AMP = fumarate + AMP. The catalysed reaction is (2S)-2-[5-amino-1-(5-phospho-beta-D-ribosyl)imidazole-4-carboxamido]succinate = 5-amino-1-(5-phospho-beta-D-ribosyl)imidazole-4-carboxamide + fumarate. The protein operates within purine metabolism; AMP biosynthesis via de novo pathway; AMP from IMP: step 2/2. It participates in purine metabolism; IMP biosynthesis via de novo pathway; 5-amino-1-(5-phospho-D-ribosyl)imidazole-4-carboxamide from 5-amino-1-(5-phospho-D-ribosyl)imidazole-4-carboxylate: step 2/2. The chain is Adenylosuccinate lyase (ADE13) from Saccharomyces cerevisiae (strain ATCC 204508 / S288c) (Baker's yeast).